An 85-amino-acid polypeptide reads, in one-letter code: Major outer membrane protein 1 (85 aa).

A signal peptide spans 1-18 (MEAREVEEMRRSRLLTLG). The chain crosses the membrane as a helical span at residues 22–42 (YTAVIALAALVLVMGALGLVL).

Forms extremely stable complexes with apparent masses of 150, 50, 45 and 38 kDa. Found in a ring-shaped complex of 7 nm diameter with a 2 nm channel through the middle. Complete denaturation requires temperatures over 110 degrees Celsius.

Its subcellular location is the cell outer membrane. In terms of biological role, the most abundant protein of the outer membrane, it forms a pore through it. This Ignicoccus hospitalis (strain KIN4/I / DSM 18386 / JCM 14125) protein is Major outer membrane protein 1 (ihomp1).